The following is a 407-amino-acid chain: Large ribosomal subunit protein uL4y (407 aa).

Residues 57-96 are disordered; that stretch reads PYAVSKKAGHQTSAESWGTGRAVSRIPRVPGGGTHRAGQA.

Belongs to the universal ribosomal protein uL4 family.

This chain is Large ribosomal subunit protein uL4y (RPL4D), found in Arabidopsis thaliana (Mouse-ear cress).